Reading from the N-terminus, the 351-residue chain is Histidinol-phosphate aminotransferase (351 aa).

K221 carries the post-translational modification N6-(pyridoxal phosphate)lysine.

The protein belongs to the class-II pyridoxal-phosphate-dependent aminotransferase family. Histidinol-phosphate aminotransferase subfamily. Homodimer. It depends on pyridoxal 5'-phosphate as a cofactor.

It carries out the reaction L-histidinol phosphate + 2-oxoglutarate = 3-(imidazol-4-yl)-2-oxopropyl phosphate + L-glutamate. It participates in amino-acid biosynthesis; L-histidine biosynthesis; L-histidine from 5-phospho-alpha-D-ribose 1-diphosphate: step 7/9. The chain is Histidinol-phosphate aminotransferase from Staphylococcus epidermidis (strain ATCC 35984 / DSM 28319 / BCRC 17069 / CCUG 31568 / BM 3577 / RP62A).